We begin with the raw amino-acid sequence, 152 residues long: Large ribosomal subunit protein uL15 (152 aa).

The segment at 18 to 37 (RVARGIGSGKGKTAGRGVKG) is disordered. A compositionally biased stretch (gly residues) spans 23 to 35 (IGSGKGKTAGRGV).

Belongs to the universal ribosomal protein uL15 family. In terms of assembly, part of the 50S ribosomal subunit.

Binds to the 23S rRNA. This chain is Large ribosomal subunit protein uL15, found in Rickettsia bellii (strain OSU 85-389).